Reading from the N-terminus, the 656-residue chain is Methylenetetrahydrofolate reductase (NADPH) (656 aa).

Polar residues predominate over residues 1–12 (MVNEARGNSSLN). The disordered stretch occupies residues 1 to 44 (MVNEARGNSSLNPCLEGSASSGSESSKDSSRCSTPGLDPERHER). Residues Ser9, Ser10, Ser18, Ser20, Ser21, Ser23, Ser25, Ser26, Ser29, and Ser30 each carry the phosphoserine modification. Thr34 carries the post-translational modification Phosphothreonine. Glu63 serves as the catalytic Proton donor/acceptor. 63-68 (EFFPPR) provides a ligand contact to NAD(+). Tyr90 carries the phosphotyrosine modification. Thr94 carries the phosphothreonine modification. 94 to 95 (TW) is an NAD(+) binding site. 94–95 (TW) is an FAD binding site. Ser103 carries the post-translational modification Phosphoserine. FAD contacts are provided by residues His127, 157 to 159 (RGD), 174 to 175 (YA), Tyr197, 201 to 204 (HPEA), Asp210, and Lys217. Asp159 contacts substrate. Substrate contacts are provided by Gln228, Tyr321, and Arg325. At Ser394 the chain carries Phosphoserine. Thr451 is modified (phosphothreonine). Residues Asn456, 461–464 (AAET), 481–485 (TINSQ), Thr560, and Thr573 each bind S-adenosyl-L-methionine.

This sequence belongs to the methylenetetrahydrofolate reductase family. Homodimer. The cofactor is FAD. Post-translationally, phosphorylation of an N-terminal serine-rich phosphorylation region increases sensitivity to S-adenosylmethionine and inhibition.

The catalysed reaction is (6S)-5-methyl-5,6,7,8-tetrahydrofolate + NADP(+) = (6R)-5,10-methylene-5,6,7,8-tetrahydrofolate + NADPH + H(+). It participates in one-carbon metabolism; tetrahydrofolate interconversion. Allosterically regulated by S-adenosylmethionine (SAM). Its function is as follows. Catalyzes the conversion of 5,10-methylenetetrahydrofolate to 5-methyltetrahydrofolate, a cosubstrate for homocysteine remethylation to methionine. Represents a key regulatory connection between the folate and methionine cycles. This is Methylenetetrahydrofolate reductase (NADPH) from Homo sapiens (Human).